Consider the following 329-residue polypeptide: Aurora kinase B (329 aa).

A compositionally biased stretch (basic residues) spans Met1–Leu14. Residues Met1–Val21 are disordered. The Protein kinase domain occupies Phe53–Val305. ATP is bound by residues Leu59 to Val67 and Lys82. Asp178 functions as the Proton acceptor in the catalytic mechanism.

This sequence belongs to the protein kinase superfamily. Ser/Thr protein kinase family. Aurora subfamily. As to quaternary structure, interacts with Incenp and Cdc37. Requires Mg(2+) as cofactor.

Its subcellular location is the chromosome. The protein resides in the cytoplasm. It is found in the cytoskeleton. The protein localises to the midbody. It catalyses the reaction L-seryl-[protein] + ATP = O-phospho-L-seryl-[protein] + ADP + H(+). It carries out the reaction L-threonyl-[protein] + ATP = O-phospho-L-threonyl-[protein] + ADP + H(+). Serine/threonine-protein kinase that mediates both meiotic and mitotic chromosome segregation. Required for histone H3 'Ser-10' phosphorylation. Phosphorylates mei-S332 within residues 124-126 and stabilizes its association with centromeres during meiosis. May regulate the function of the ESCRT-III complex core component shrb during abscission of germline cells in oogenesis. This chain is Aurora kinase B, found in Drosophila melanogaster (Fruit fly).